An 830-amino-acid chain; its full sequence is Probable glucan 1,3-beta-glucosidase D (830 aa).

Basic and acidic residues predominate over residues 1-34; the sequence is MPSQSRSRDRYRGRDTEYTRRRYPDEHDYSHDDH. Positions 1 to 279 are disordered; that stretch reads MPSQSRSRDR…PPMDARWPKG (279 aa). Residues 1 to 301 lie on the Cytoplasmic side of the membrane; the sequence is MPSQSRSRDR…GRPFWKQKKW (301 aa). Residues 35-51 show a composition bias toward acidic residues; the sequence is DYDYDDDDDDNDDLEQD. Composition is skewed to basic and acidic residues over residues 52 to 98 and 110 to 175; these read VTER…ERRR and QHRE…KHQS. Residues 181 to 194 are compositionally biased toward low complexity; it reads SASHLLSADALARL. 3 stretches are compositionally biased toward basic and acidic residues: residues 198 to 215, 228 to 243, and 253 to 264; these read YEKE…AAKA, EQER…DRSR, and EEGRGPEMEFRR. Residues 302–322 traverse the membrane as a helical; Signal-anchor for type II membrane protein segment; it reads LIGIGVVILILVIVIPVAVVV. Residues 323 to 830 are Extracellular-facing; it reads SKKHNDKPNA…PDFGSLPEYY (508 aa). Residues 327 to 351 are disordered; that stretch reads NDKPNATTTQPDGTTPSNSNLDGLS. Polar residues predominate over residues 330-348; it reads PNATTTQPDGTTPSNSNLD. N-linked (GlcNAc...) asparagine glycans are attached at residues Asn331, Asn376, Asn381, Asn393, Asn546, and Asn558. Glu597 serves as the catalytic Proton donor. N-linked (GlcNAc...) asparagine glycosylation is found at Asn610, Asn636, Asn669, and Asn689. The Nucleophile role is filled by Glu701.

It belongs to the glycosyl hydrolase 5 (cellulase A) family.

It localises to the cell membrane. The catalysed reaction is Successive hydrolysis of beta-D-glucose units from the non-reducing ends of (1-&gt;3)-beta-D-glucans, releasing alpha-glucose.. In terms of biological role, glucosidase involved in the degradation of cellulosic biomass. Active on lichenan. This chain is Probable glucan 1,3-beta-glucosidase D (exgD), found in Aspergillus clavatus (strain ATCC 1007 / CBS 513.65 / DSM 816 / NCTC 3887 / NRRL 1 / QM 1276 / 107).